The primary structure comprises 246 residues: Ribonuclease PH (246 aa).

A disordered region spans residues 67 to 87; that stretch reads NMLPGSTSPRKRRDRSGKVDG. Residues R88 and 126-128 contribute to the phosphate site; that span reads GTR.

The protein belongs to the RNase PH family. In terms of assembly, homohexameric ring arranged as a trimer of dimers.

It carries out the reaction tRNA(n+1) + phosphate = tRNA(n) + a ribonucleoside 5'-diphosphate. Its function is as follows. Phosphorolytic 3'-5' exoribonuclease that plays an important role in tRNA 3'-end maturation. Removes nucleotide residues following the 3'-CCA terminus of tRNAs; can also add nucleotides to the ends of RNA molecules by using nucleoside diphosphates as substrates, but this may not be physiologically important. Probably plays a role in initiation of 16S rRNA degradation (leading to ribosome degradation) during starvation. The sequence is that of Ribonuclease PH from Rhodopirellula baltica (strain DSM 10527 / NCIMB 13988 / SH1).